The chain runs to 872 residues: MSVTNLSWLKKKSQSVDITAPGFNPLAGAGKQMPQASKPPAPKTPIIEEEQNNAANSQKHPSRRSELKRFYTIDTGQKKTLDKKDGRRMSFQKPKGTVKYTVESRDSLNSIALKFDTTPNELVQLNKLFSRAVVTGQVLYVPDPEYVSSVESSPSLSPISPLSPTSSEAELEKTTTPDVVHPKEPTPSSAFTAVRPVRVVSSTSEEEEAFTEKFLKINCRYITSSKGTVSGVLLVTPNNIMFDPHKTDPLVQENGCEEYGIMCPMEEVMSAAMYKEILDSKIKESLPIEIDQLSGRDFCHLKKVTRSNTDELDSRIRDAANDSASTAPRSTEESLSEDVFTESELSPVREELISLDELRHDKSSGASSESVQTITQSGVECLAVISEAASTPDHLKSGSGHTANEVGTLSLKTGLNNLEMPTKEGDQAADNLQKISGLKEQSTGIKKDNQDFPLDENSLHQEEVEKESMPCGEAIELKQKQVVDKGKQGREQNQDSETEVEELRKLWKSHSMQQTKQQRETMQQVSQKEIKHKIATADIEGSALLKEKRRHRLHKFLCLRVRKPMRKTFVSQASATMQQYAQRDKKHEYWFAVPQERTDHLYAFFIQWSPETYAEDTGEYTKEPGFIVVKKIEESETNEDSTNEAAAREWEVVSVAEYHRRIDALNTEELRTLCRRLQITTREDINSKQSTPVKADLESESFRPNLSDPSHLLLPDQIIKLTKHLPPRTIGYPWTLVYGTRKHGTSLKTLYRTMTGLDTPVLMVIKDSDWQVFGAFASQPFKVSDGFYGNGETFVFTFCPEFEVFKWTGDNMFFIKGDMDSLAFGGGGGEFALWLDGDLYHGRSHSCKTFGNHTLSKKEDFCIQDIEIWAFK.

The interval 1-86 (MSVTNLSWLK…QKKTLDKKDG (86 aa)) is disordered. The span at 63–86 (RRSELKRFYTIDTGQKKTLDKKDG) shows a compositional bias: basic and acidic residues. A Phosphoserine modification is found at Ser-90. One can recognise a LysM domain in the interval 98–141 (VKYTVESRDSLNSIALKFDTTPNELVQLNKLFSRAVVTGQVLYV). The residue at position 118 (Thr-118) is a Phosphothreonine. Residues 150–168 (VESSPSLSPISPLSPTSSE) show a composition bias toward low complexity. Residues 150–187 (VESSPSLSPISPLSPTSSEAELEKTTTPDVVHPKEPTP) form a disordered region. The segment covering 170-184 (ELEKTTTPDVVHPKE) has biased composition (basic and acidic residues). 3 positions are modified to phosphoserine: Ser-201, Ser-202, and Ser-204. The GRAM domain maps to 212–268 (EKFLKINCRYITSSKGTVSGVLLVTPNNIMFDPHKTDPLVQENGCEEYGIMCPMEEV). Ser-294, Ser-334, and Ser-336 each carry phosphoserine. Residues 314 to 338 (SRIRDAANDSASTAPRSTEESLSED) form a disordered region. A Phosphothreonine modification is found at Thr-341. 2 positions are modified to phosphoserine: Ser-346 and Ser-496. The mediates oxidative antimutator activity stretch occupies residues 549–576 (RRHRLHKFLCLRVRKPMRKTFVSQASAT). The 162-residue stretch at 711-872 (HLLLPDQIIK…IQDIEIWAFK (162 aa)) folds into the TLDc domain.

The protein belongs to the OXR1 family.

It is found in the mitochondrion. Its function is as follows. May be involved in protection from oxidative damage. The chain is Oxidation resistance protein 1 (OXR1) from Bos taurus (Bovine).